The primary structure comprises 165 residues: NADH-quinone oxidoreductase subunit I (165 aa).

2 consecutive 4Fe-4S ferredoxin-type domains span residues 57-86 and 96-125; these read RRYENGEERCIACKLCEAVCPALAITIESD and SRYDIDLTKCIFCGFCEESCPVDSIVETHI. 8 residues coordinate [4Fe-4S] cluster: C66, C69, C72, C76, C105, C108, C111, and C115.

Belongs to the complex I 23 kDa subunit family. In terms of assembly, NDH-1 is composed of 14 different subunits. Subunits NuoA, H, J, K, L, M, N constitute the membrane sector of the complex. It depends on [4Fe-4S] cluster as a cofactor.

The protein resides in the cell inner membrane. The catalysed reaction is a quinone + NADH + 5 H(+)(in) = a quinol + NAD(+) + 4 H(+)(out). In terms of biological role, NDH-1 shuttles electrons from NADH, via FMN and iron-sulfur (Fe-S) centers, to quinones in the respiratory chain. The immediate electron acceptor for the enzyme in this species is believed to be ubiquinone. Couples the redox reaction to proton translocation (for every two electrons transferred, four hydrogen ions are translocated across the cytoplasmic membrane), and thus conserves the redox energy in a proton gradient. This chain is NADH-quinone oxidoreductase subunit I, found in Polaromonas naphthalenivorans (strain CJ2).